Consider the following 459-residue polypeptide: Periodic tryptophan protein 1 homolog (459 aa).

Residues 44–84 (GDTQQELDEESDDDAEEGENAEEDQNDMDVDDHADANSENR) are disordered. A compositionally biased stretch (acidic residues) spans 48–73 (QELDEESDDDAEEGENAEEDQNDMDV). A compositionally biased stretch (basic and acidic residues) spans 74–84 (DDHADANSENR). 5 WD repeats span residues 168–214 (LLPS…AIEP), 232–272 (GHKD…PHTT), 275–315 (AFGK…GVNS), 321–361 (KVDG…QLLW), and 365–405 (AHNE…AKHV). S385 bears the Phosphoserine mark.

This sequence belongs to the WD repeat PWP1 family. In terms of assembly, interacts with Mybbp1A. Post-translationally, phosphorylated in response to nutrient-activated TORC1 signaling. Detected in the germline of adult testis and ovary (at protein level). Detected in ovary somatic cells, in zfh1-positive cyst cells in the testis and absent in differentiated cyst cells (at protein level).

Its subcellular location is the nucleus. The protein localises to the nucleolus. The protein resides in the chromosome. It is found in the nucleoplasm. In terms of biological role, chromatin-associated factor that regulates transcription. Regulates Pol I-mediated rRNA biogenesis and, probably, Pol III-mediated transcription. Regulates the localization to the nucleolus of Cdk7, a regulator of the Pol I-elongation factor TFIIH. Acts as a regulator of cell proliferation and tissue growth as part of the TORC1 and Myc signaling pathway in response to nutrients. Required in males for both germline stem cell (GSC) maintenance and early stages of germ cell differentiation of germ cell cysts. Not required for female germline stem cell (GSC) maintenance, but necessary to regulate germ cell differentiation and egg chamber development. In female somatic cells, required for follicle stem cell survival and maintenance. The sequence is that of Periodic tryptophan protein 1 homolog from Drosophila melanogaster (Fruit fly).